Here is a 161-residue protein sequence, read N- to C-terminus: Allophycocyanin beta chain (161 aa).

N71 is subject to N4-methylasparagine. C81 serves as a coordination point for (2R,3E)-phycocyanobilin.

The protein belongs to the phycobiliprotein family. In terms of assembly, heterodimer of an alpha and a beta chain. Contains one covalently linked phycocyanobilin chromophore.

It localises to the cellular thylakoid membrane. Light-harvesting photosynthetic bile pigment-protein from the phycobiliprotein complex. Allophycocyanin has a maximum absorption at approximately 650 nanometers. The protein is Allophycocyanin beta chain (apcB) of Thermosynechococcus vestitus (strain NIES-2133 / IAM M-273 / BP-1).